Consider the following 203-residue polypeptide: dITP/XTP pyrophosphatase (203 aa).

Substrate is bound at residue 8-13 (TANKGK). Mg(2+) is bound by residues Glu-41 and Asp-70. The Proton acceptor role is filled by Asp-70. Residues Ser-71, 153 to 156 (FGYD), Lys-176, and 181 to 182 (HR) contribute to the substrate site.

The protein belongs to the HAM1 NTPase family. Homodimer. It depends on Mg(2+) as a cofactor.

It carries out the reaction XTP + H2O = XMP + diphosphate + H(+). The catalysed reaction is dITP + H2O = dIMP + diphosphate + H(+). The enzyme catalyses ITP + H2O = IMP + diphosphate + H(+). In terms of biological role, pyrophosphatase that catalyzes the hydrolysis of nucleoside triphosphates to their monophosphate derivatives, with a high preference for the non-canonical purine nucleotides XTP (xanthosine triphosphate), dITP (deoxyinosine triphosphate) and ITP. Seems to function as a house-cleaning enzyme that removes non-canonical purine nucleotides from the nucleotide pool, thus preventing their incorporation into DNA/RNA and avoiding chromosomal lesions. The sequence is that of dITP/XTP pyrophosphatase from Listeria innocua serovar 6a (strain ATCC BAA-680 / CLIP 11262).